The following is a 410-amino-acid chain: Alanine racemase (410 aa).

In terms of domain architecture, RPE1 insert spans valine 28 to leucine 76. Lysine 83 functions as the Proton acceptor; specific for D-alanine in the catalytic mechanism. At lysine 83 the chain carries N6-(pyridoxal phosphate)lysine. Residue arginine 182 coordinates substrate. The active-site Proton acceptor; specific for L-alanine is tyrosine 305. Methionine 353 serves as a coordination point for substrate.

The protein belongs to the alanine racemase family. It depends on pyridoxal 5'-phosphate as a cofactor.

The enzyme catalyses L-alanine = D-alanine. It functions in the pathway amino-acid biosynthesis; D-alanine biosynthesis; D-alanine from L-alanine: step 1/1. Its function is as follows. Catalyzes the interconversion of L-alanine and D-alanine. May also act on other amino acids. In Rickettsia bellii (strain RML369-C), this protein is Alanine racemase (alr).